The following is a 381-amino-acid chain: Ribosomal lysine N-methyltransferase set11 (381 aa).

The 202-residue stretch at P23–G224 folds into the SET domain. Y223 contributes to the S-adenosyl-L-methionine binding site.

It belongs to the class V-like SAM-binding methyltransferase superfamily. RKM2 family.

Its subcellular location is the cytoplasm. It is found in the nucleus. It localises to the nucleolus. Functionally, S-adenosyl-L-methionine-dependent protein-lysine N-methyltransferase that trimethylates 60S ribosomal protein L12 (rpl1201 and rpl1202) at 'Lys-4' and may dimethylate L12 also at 'Lys-40' and 'Lys-41'. Overexpression causes a severe growth defect. Has a role in meiosis. The sequence is that of Ribosomal lysine N-methyltransferase set11 (set11) from Schizosaccharomyces pombe (strain 972 / ATCC 24843) (Fission yeast).